We begin with the raw amino-acid sequence, 482 residues long: Nucleoside triphosphate pyrophosphatase/Nudix hydrolase fusion protein (482 aa).

The segment at 1-299 (MSIPLILASK…DLWNVGRGEL (299 aa)) is maf-like. The active-site Proton acceptor is aspartate 167. In terms of domain architecture, Nudix hydrolase spans 338–475 (GTNGASGILL…TDWPRFAARL (138 aa)).

In the N-terminal section; belongs to the Maf family. Requires a divalent metal cation as cofactor.

Its subcellular location is the cytoplasm. The enzyme catalyses a ribonucleoside 5'-triphosphate + H2O = a ribonucleoside 5'-phosphate + diphosphate + H(+). It catalyses the reaction a 2'-deoxyribonucleoside 5'-triphosphate + H2O = a 2'-deoxyribonucleoside 5'-phosphate + diphosphate + H(+). Nucleoside triphosphate pyrophosphatase. May have a dual role in cell division arrest and in preventing the incorporation of modified nucleotides into cellular nucleic acids. In Bifidobacterium longum (strain NCC 2705), this protein is Nucleoside triphosphate pyrophosphatase/Nudix hydrolase fusion protein.